A 223-amino-acid chain; its full sequence is uncharacterized protein (223 aa).

The 112-residue stretch at 5-116 (RILIVEDDVM…ELLLRMRNML (112 aa)) folds into the Response regulatory domain. At aspartate 52 the chain carries 4-aspartylphosphate. Positions 121-219 (GTFTQIKHLY…IYGEGYRLNT (99 aa)) form a DNA-binding region, ompR/PhoB-type.

Phosphorylated by YbdK.

It is found in the cytoplasm. Member of the two-component regulatory system YbdK/YbdJ. This is an uncharacterized protein from Bacillus subtilis (strain 168).